The chain runs to 141 residues: Hemoglobin subunit alpha (141 aa).

The Globin domain maps to 1-141 (VLSPADKTNV…VSTVLTSKYR (141 aa)). Residue Ser-3 is modified to Phosphoserine. Lys-7 carries the post-translational modification N6-succinyllysine. Thr-8 is modified (phosphothreonine). An N6-succinyllysine modification is found at Lys-11. Residue Lys-16 is modified to N6-acetyllysine; alternate. Lys-16 carries the N6-succinyllysine; alternate modification. A Phosphoserine modification is found at Ser-35. Lys-40 is modified (N6-succinyllysine). His-58 contacts O2. Residue His-87 participates in heme b binding. Ser-102 carries the phosphoserine modification. Position 108 is a phosphothreonine (Thr-108). Phosphoserine is present on residues Ser-124 and Ser-131. Phosphothreonine occurs at positions 134 and 137. Ser-138 is subject to Phosphoserine.

It belongs to the globin family. Heterotetramer of two alpha chains and two beta chains. As to expression, red blood cells.

Its function is as follows. Involved in oxygen transport from the lung to the various peripheral tissues. Hemopressin acts as an antagonist peptide of the cannabinoid receptor CNR1. Hemopressin-binding efficiently blocks cannabinoid receptor CNR1 and subsequent signaling. The chain is Hemoglobin subunit alpha (HBA) from Physeter macrocephalus (Sperm whale).